Reading from the N-terminus, the 746-residue chain is Root phototropism protein 3 (746 aa).

Positions 1–24 are disordered; that stretch reads MMWESESDGGVGVGGGGGREYGDG. Over residues 9–19 the composition is skewed to gly residues; it reads GGVGVGGGGGR. The BTB domain occupies 54–122; it reads SDLLVKIGDM…CYGVPVDLTA (69 aa). In terms of domain architecture, NPH3 spans 250–605; that stretch reads DWWFEDVSIL…VQVLFSEQVK (356 aa). The segment at 461-500 is disordered; that stretch reads EQTEGSSPSRMSPSPSQSMYADIPRGNNNNGGGGGGNNQN. Residues 466-478 are compositionally biased toward low complexity; that stretch reads SSPSRMSPSPSQS. Phosphotyrosine is present on Y546. The interval 708–746 is disordered; sequence SKLTKMSGQESHDISSGGEQAGVDHPPPRKPRRWRNSIS. The segment covering 735 to 746 has biased composition (basic residues); the sequence is PRKPRRWRNSIS.

It belongs to the NPH3 family. In terms of assembly, interacts with PKS1, PKS2, RPT2, PHOT1 and PHOT2. Subunit of a complex made of CAR6, PHOT1 and RPT3/NPH3. In terms of processing, phosphorylated in the dark. In terms of tissue distribution, expressed in hypocotyls, guard cells and mesophyll cells.

Its subcellular location is the cell membrane. Its pathway is protein modification; protein ubiquitination. Its function is as follows. May act as a substrate-specific adapter of an E3 ubiquitin-protein ligase complex (CUL3-RBX1-BTB) which mediates the ubiquitination and subsequent proteasomal degradation of target proteins. Signal transducer of the phototropic response and photo-induced movements. Involved in the phot1 pathway under low blue light (LBL) fluence rate and in the phot2 pathway under higher fluence rate of blue light (HBL). Necessary for root and hypocotyl phototropisms, but not for the regulation of stomata opening. Not involved in chloroplast accumulation and translocation. This chain is Root phototropism protein 3 (RPT3), found in Arabidopsis thaliana (Mouse-ear cress).